A 164-amino-acid polypeptide reads, in one-letter code: C-phycoerythrin class 1 subunit alpha (164 aa).

(2R,3E)-phycoerythrobilin contacts are provided by C82 and C139.

This sequence belongs to the phycobiliprotein family. Heterodimer of an alpha and a beta chain. Contains two covalently linked phycoerythrobilin chromophores.

The protein resides in the cellular thylakoid membrane. In terms of biological role, light-harvesting photosynthetic bile pigment-protein from the phycobiliprotein complex. In Synechococcus sp. (strain WH8020), this protein is C-phycoerythrin class 1 subunit alpha (cpeA).